The primary structure comprises 570 residues: Urease subunit alpha (570 aa).

Residues 131 to 570 (GGFDAHIHFI…LPMAQRYFLF (440 aa)) form the Urease domain. Ni(2+) is bound by residues H136, H138, and K219. An N6-carboxylysine modification is found at K219. A substrate-binding site is contributed by H221. Residues H248 and H274 each coordinate Ni(2+). The Proton donor role is filled by H322. D362 contributes to the Ni(2+) binding site.

The protein belongs to the metallo-dependent hydrolases superfamily. Urease alpha subunit family. In terms of assembly, heterotrimer of UreA (gamma), UreB (beta) and UreC (alpha) subunits. Three heterotrimers associate to form the active enzyme. Ni cation is required as a cofactor. Carboxylation allows a single lysine to coordinate two nickel ions.

Its subcellular location is the cytoplasm. The enzyme catalyses urea + 2 H2O + H(+) = hydrogencarbonate + 2 NH4(+). It participates in nitrogen metabolism; urea degradation; CO(2) and NH(3) from urea (urease route): step 1/1. The polypeptide is Urease subunit alpha (Chelativorans sp. (strain BNC1)).